A 348-amino-acid polypeptide reads, in one-letter code: Putative olfactory receptor 3A4 (348 aa).

Topologically, residues methionine 1 to proline 28 are extracellular. N-linked (GlcNAc...) asparagine glycosylation occurs at asparagine 8. The chain crosses the membrane as a helical span at residues isoleucine 29–isoleucine 52. At leucine 53–serine 60 the chain is on the cytoplasmic side. The chain crosses the membrane as a helical span at residues proline 61 to proline 82. The Extracellular portion of the chain corresponds to alanine 83–glutamate 103. Cysteine 100 and cysteine 192 are joined by a disulfide. A helical membrane pass occupies residues leucine 104–tyrosine 123. At aspartate 124 to isoleucine 143 the chain is on the cytoplasmic side. Residues glutamine 144–threonine 161 form a helical membrane-spanning segment. The Extracellular segment spans residues glutamine 162–glycine 199. A helical transmembrane segment spans residues glutamine 200–alanine 222. Topologically, residues histidine 223–lysine 239 are cytoplasmic. The chain crosses the membrane as a helical span at residues alanine 240–tyrosine 262. Residues threonine 263–lysine 275 lie on the Extracellular side of the membrane. Residues glycine 276 to threonine 295 form a helical membrane-spanning segment. At serine 296–leucine 348 the chain is on the cytoplasmic side.

It belongs to the G-protein coupled receptor 1 family.

It is found in the cell membrane. Its function is as follows. Odorant receptor. The protein is Putative olfactory receptor 3A4 (OR3A4P) of Homo sapiens (Human).